The primary structure comprises 516 residues: Cytochrome P450 monooxygenase otaC (516 aa).

The chain crosses the membrane as a helical span at residues 13 to 30 (FLWTAFAVGVVYCCTRMV). Position 454 (cysteine 454) interacts with heme.

The protein belongs to the cytochrome P450 family. Heme serves as cofactor.

Its subcellular location is the membrane. It carries out the reaction 7-methylmellein + 3 reduced [NADPH--hemoprotein reductase] + 3 O2 = 7-carboxymellein + 3 oxidized [NADPH--hemoprotein reductase] + 4 H2O + 4 H(+). Its pathway is mycotoxin biosynthesis. Functionally, cytochrome P450 monooxygenase; part of the gene cluster that mediates the biosynthesis of ochratoxin A (OTA), a mycotoxin composed of a chlorinated type I polyketide dihydroisocoumarin moiety linked to L-phenylalanine, and demonstrated to have nephrotoxic, immunotoxic, genotoxic, neurotoxic, and teratogenic properties. OtaC catalyzes the oxidation of 7-methylmellein (7-MM) into 7-carboxymellein. The pathway begins with the highly reducing polyketide synthase otaA that catalyzes the formation of the isocoumarin group during the initial stages of biosynthesis, starting from one acetate and 4 malonate units, to originate the characteristic pentaketide skeleton 7-methylmellein (7-MM) of the OTA molecule. The newly identified cyclase otaY might be involved in the polyketide cyclization reaction during the initial steps of the OTA biosynthesis. 7-MM is then oxidized into 7-carboxymellein (also called ochratoxin beta) by the cytochrome P450 monooxygenase otaC. The NRPS encoded by the otaB gene is involved in the linking of phenylalanine to the dihydroisocoumarin ring. The reaction catalyzed by NRPS results in the production of ochratoxin B (OTB), which is the non-chlorinated analog of OTA and which subsequently serves as the substrate of the halogenase otaD for chlorination activity to form the final molecular structure of OTA, containing a chlorine atom in the C-5 position of the molecule. The polypeptide is Cytochrome P450 monooxygenase otaC (Aspergillus carbonarius (strain ITEM 5010)).